Here is a 295-residue protein sequence, read N- to C-terminus: Epidermal growth factor-like protein 8 (295 aa).

A signal peptide spans 1–25 (MGSRAELHTLLGGLSFLLLLMSGQG). Residues 34–112 (SQGVCSRQTL…RHPGALTCDE (79 aa)) enclose the EMI domain. 9 disulfides stabilise this stretch: Cys-38/Cys-97, Cys-65/Cys-71, Cys-96/Cys-110, Cys-115/Cys-125, Cys-119/Cys-131, Cys-133/Cys-142, Cys-149/Cys-160, Cys-156/Cys-169, and Cys-171/Cys-184. N-linked (GlcNAc...) asparagine glycosylation occurs at Asn-50. Positions 111-143 (DEAICAKPCQNGGVCVRPDQCECAPGWGGRHCH) constitute an EGF-like 1 domain. An EGF-like 2; calcium-binding domain is found at 145–185 (DVDECRTGVTLCSHRCHNTAGSFTCGCPHGLVLGPDGRTCA). The stretch at 202 to 233 (VREAGREDRALRREIRELRGRLERLEQWAGQA) forms a coiled coil.

It localises to the secreted. This chain is Epidermal growth factor-like protein 8 (EGFL8), found in Sus scrofa (Pig).